Reading from the N-terminus, the 422-residue chain is Histone deacetylase B (422 aa).

A substrate-binding site is contributed by aspartate 102. The active-site Proton acceptor is histidine 144. Glycine 152 is a binding site for substrate. Aspartate 179, histidine 181, and aspartate 268 together coordinate a divalent metal cation. Tyrosine 307 is a binding site for substrate. The segment at 399 to 422 is disordered; sequence IDFDRDEDSKENMDKRKKKHNDFS. Residues 413 to 422 show a composition bias toward basic residues; it reads KRKKKHNDFS.

This sequence belongs to the histone deacetylase family. HD type 1 subfamily.

It localises to the nucleus. It is found in the cytoplasm. The catalysed reaction is N(6)-acetyl-L-lysyl-[histone] + H2O = L-lysyl-[histone] + acetate. Its activity is regulated as follows. Its activity is inhibited by trichostatin A (TSA), a well known histone deacetylase inhibitor. Cytosolic activity is refractory to inhibition by TSA, while the nuclear activity is inhibited completely. Functionally, responsible for the deacetylation of lysine residues on the N-terminal part of the core histones (H2A, H2B, H3 and H4). Histone deacetylation plays an important role in transcriptional regulation, cell cycle progression and developmental events. Histone deacetylases act via the formation of large multiprotein complexes. May play a role in the regulation of the timing of gene expression during the development and in the definition aspects of the phenotype that mediate social behavior in genetically heterogeneous groups. This chain is Histone deacetylase B (hdaB), found in Dictyostelium discoideum (Social amoeba).